The primary structure comprises 159 residues: Protein-export protein SecB (159 aa).

Belongs to the SecB family. Homotetramer, a dimer of dimers. One homotetramer interacts with 1 SecA dimer.

Its subcellular location is the cytoplasm. Its function is as follows. One of the proteins required for the normal export of preproteins out of the cell cytoplasm. It is a molecular chaperone that binds to a subset of precursor proteins, maintaining them in a translocation-competent state. It also specifically binds to its receptor SecA. This is Protein-export protein SecB from Aromatoleum aromaticum (strain DSM 19018 / LMG 30748 / EbN1) (Azoarcus sp. (strain EbN1)).